Reading from the N-terminus, the 598-residue chain is Torsin-1A-interacting protein 1 (598 aa).

The Nuclear segment spans residues 1-351 (MAGEGRRAEA…PQNASFVKRN (351 aa)). 2 disordered regions span residues 19-254 (VTPR…RSSS) and 267-314 (QNFT…IYGS). At Ser-60 the chain carries Phosphoserine. 2 stretches are compositionally biased toward basic and acidic residues: residues 73–101 (LVDKERSPVGKRTRLEEFRSDSAKEEVRE) and 115–124 (RPQEAEEMKT). A phosphoserine mark is found at Ser-135, Ser-143, Ser-154, Ser-156, Ser-157, and Ser-187. The segment covering 205–214 (EATSVQQKVN) has biased composition (polar residues). A Phosphoserine modification is found at Ser-216. Position 221 is a phosphothreonine (Thr-221). Ser-227, Ser-230, and Ser-242 each carry phosphoserine. Positions 238-250 (RSRDSDESGDKTT) are enriched in basic and acidic residues. Polar residues-rich tracts occupy residues 277 to 287 (SVLSSGYQKTP) and 300 to 313 (RMQTSSPGKSSIYG). Ser-320 carries the phosphoserine modification. The disordered stretch occupies residues 322 to 341 (LKSELGNQSPSTSSQQVTGQ). Lys-323 is covalently cross-linked (Glycyl lysine isopeptide (Lys-Gly) (interchain with G-Cter in SUMO2)). Polar residues predominate over residues 326-341 (LGNQSPSTSSQQVTGQ). Ser-330 carries the post-translational modification Phosphoserine. A helical membrane pass occupies residues 352–372 (WWWLLPLIAALASGSFWFFST). Positions 371 to 598 (STPEVETTAV…ENALKRGICL (228 aa)) are interaction with TOR1A. Topologically, residues 373–598 (PEVETTAVQE…ENALKRGICL (226 aa)) are perinuclear space. Positions 374 to 450 (EVETTAVQEF…SEQIADAYSS (77 aa)) form a coiled coil. N-linked (GlcNAc...) asparagine glycosylation occurs at Asn-414.

Belongs to the TOR1AIP family. As to quaternary structure, interacts with ATP1B4. Interacts with TOR1A (ATP-bound). Interacts with TOR1B, TOR2A and TOR3A.

The protein localises to the nucleus inner membrane. In terms of biological role, required for nuclear membrane integrity. Induces TOR1A and TOR1B ATPase activity and is required for their location on the nuclear membrane. Binds to A- and B-type lamins. Possible role in membrane attachment and assembly of the nuclear lamina. The sequence is that of Torsin-1A-interacting protein 1 (TOR1AIP1) from Pongo abelii (Sumatran orangutan).